The chain runs to 132 residues: Small ribosomal subunit protein uS8 (132 aa).

Belongs to the universal ribosomal protein uS8 family. In terms of assembly, part of the 30S ribosomal subunit. Contacts proteins S5 and S12.

Its function is as follows. One of the primary rRNA binding proteins, it binds directly to 16S rRNA central domain where it helps coordinate assembly of the platform of the 30S subunit. The polypeptide is Small ribosomal subunit protein uS8 (Anaeromyxobacter dehalogenans (strain 2CP-C)).